An 838-amino-acid chain; its full sequence is 1,4-alpha-glucan branching enzyme GlgB 1 (838 aa).

Residues 1–11 are compositionally biased toward basic and acidic residues; the sequence is MIPRPPSDDRA. Disordered regions lie at residues 1–98 and 116–142; these read MIPR…VSKK and PVSPAVAPDDRDRLLSGTHHAPHSVLG. Positions 29-57 are enriched in low complexity; the sequence is KKAAAAKKTAGKKATPAAKATAAKGAVTK. The active-site Nucleophile is D513. E566 serves as the catalytic Proton donor. The tract at residues 793-822 is disordered; the sequence is TDGARYGGSDVTNPHPVKPEPQGRHGRPAS.

Belongs to the glycosyl hydrolase 13 family. GlgB subfamily. Monomer.

It carries out the reaction Transfers a segment of a (1-&gt;4)-alpha-D-glucan chain to a primary hydroxy group in a similar glucan chain.. Its pathway is glycan biosynthesis; glycogen biosynthesis. Functionally, catalyzes the formation of the alpha-1,6-glucosidic linkages in glycogen by scission of a 1,4-alpha-linked oligosaccharide from growing alpha-1,4-glucan chains and the subsequent attachment of the oligosaccharide to the alpha-1,6 position. This chain is 1,4-alpha-glucan branching enzyme GlgB 1, found in Streptomyces avermitilis (strain ATCC 31267 / DSM 46492 / JCM 5070 / NBRC 14893 / NCIMB 12804 / NRRL 8165 / MA-4680).